The sequence spans 97 residues: Co-chaperonin GroES (97 aa).

The protein belongs to the GroES chaperonin family. Heptamer of 7 subunits arranged in a ring. Interacts with the chaperonin GroEL.

The protein resides in the cytoplasm. In terms of biological role, together with the chaperonin GroEL, plays an essential role in assisting protein folding. The GroEL-GroES system forms a nano-cage that allows encapsulation of the non-native substrate proteins and provides a physical environment optimized to promote and accelerate protein folding. GroES binds to the apical surface of the GroEL ring, thereby capping the opening of the GroEL channel. In Erwinia tasmaniensis (strain DSM 17950 / CFBP 7177 / CIP 109463 / NCPPB 4357 / Et1/99), this protein is Co-chaperonin GroES.